A 159-amino-acid polypeptide reads, in one-letter code: Phosphopantetheine adenylyltransferase (159 aa).

T10 lines the substrate pocket. Residues 10-11 and H18 each bind ATP; that span reads TF. K42, M74, and R88 together coordinate substrate. Residues 89–91, E99, and 124–130 each bind ATP; these read GLR and WSFISSS.

It belongs to the bacterial CoaD family. As to quaternary structure, homohexamer. Mg(2+) serves as cofactor.

The protein resides in the cytoplasm. It carries out the reaction (R)-4'-phosphopantetheine + ATP + H(+) = 3'-dephospho-CoA + diphosphate. The protein operates within cofactor biosynthesis; coenzyme A biosynthesis; CoA from (R)-pantothenate: step 4/5. In terms of biological role, reversibly transfers an adenylyl group from ATP to 4'-phosphopantetheine, yielding dephospho-CoA (dPCoA) and pyrophosphate. The polypeptide is Phosphopantetheine adenylyltransferase (Salmonella typhimurium (strain LT2 / SGSC1412 / ATCC 700720)).